The primary structure comprises 372 residues: Queuine tRNA-ribosyltransferase (372 aa).

Asp-89 (proton acceptor) is an active-site residue. Residues 89–93 (DSGGF), Asp-161, and Gly-232 contribute to the substrate site. The tract at residues 262 to 268 (GIGDLPS) is RNA binding. Catalysis depends on Asp-281, which acts as the Nucleophile. Positions 286-290 (TKAAR) are RNA binding; important for wobble base 34 recognition. 4 residues coordinate Zn(2+): Cys-319, Cys-321, Cys-324, and His-351.

It belongs to the queuine tRNA-ribosyltransferase family. In terms of assembly, homodimer. Within each dimer, one monomer is responsible for RNA recognition and catalysis, while the other monomer binds to the replacement base PreQ1. Zn(2+) is required as a cofactor.

It catalyses the reaction 7-aminomethyl-7-carbaguanine + guanosine(34) in tRNA = 7-aminomethyl-7-carbaguanosine(34) in tRNA + guanine. It functions in the pathway tRNA modification; tRNA-queuosine biosynthesis. In terms of biological role, catalyzes the base-exchange of a guanine (G) residue with the queuine precursor 7-aminomethyl-7-deazaguanine (PreQ1) at position 34 (anticodon wobble position) in tRNAs with GU(N) anticodons (tRNA-Asp, -Asn, -His and -Tyr). Catalysis occurs through a double-displacement mechanism. The nucleophile active site attacks the C1' of nucleotide 34 to detach the guanine base from the RNA, forming a covalent enzyme-RNA intermediate. The proton acceptor active site deprotonates the incoming PreQ1, allowing a nucleophilic attack on the C1' of the ribose to form the product. After dissociation, two additional enzymatic reactions on the tRNA convert PreQ1 to queuine (Q), resulting in the hypermodified nucleoside queuosine (7-(((4,5-cis-dihydroxy-2-cyclopenten-1-yl)amino)methyl)-7-deazaguanosine). The chain is Queuine tRNA-ribosyltransferase from Chlamydia felis (strain Fe/C-56) (Chlamydophila felis).